Consider the following 243-residue polypeptide: tRNA (cytidine/uridine-2'-O-)-methyltransferase TrmJ (243 aa).

Residues threonine 79 to alanine 81, glycine 114, isoleucine 134, and serine 141 to leucine 143 each bind S-adenosyl-L-methionine.

This sequence belongs to the class IV-like SAM-binding methyltransferase superfamily. RNA methyltransferase TrmH family. In terms of assembly, homodimer.

It is found in the cytoplasm. It catalyses the reaction cytidine(32) in tRNA + S-adenosyl-L-methionine = 2'-O-methylcytidine(32) in tRNA + S-adenosyl-L-homocysteine + H(+). It carries out the reaction uridine(32) in tRNA + S-adenosyl-L-methionine = 2'-O-methyluridine(32) in tRNA + S-adenosyl-L-homocysteine + H(+). Functionally, catalyzes the formation of 2'O-methylated cytidine (Cm32) or 2'O-methylated uridine (Um32) at position 32 in tRNA. The protein is tRNA (cytidine/uridine-2'-O-)-methyltransferase TrmJ (trmJ) of Salmonella choleraesuis (strain SC-B67).